Here is a 364-residue protein sequence, read N- to C-terminus: Gap junction delta-4 protein (364 aa).

Topologically, residues 1–19 are cytoplasmic; it reads MEKLNLLGFLIITLNCNVT. The chain crosses the membrane as a helical span at residues 20 to 40; it reads IMGMIWLIVEVLLRMLVVVLA. At 41–76 the chain is on the extracellular side; that stretch reads GSPIYEDEQERFICNTLQPGCANVCYDLFSPVSPLR. Residues 77–97 form a helical membrane-spanning segment; sequence FWLVQSLALLLPSVVFGTYTL. Topologically, residues 98–128 are cytoplasmic; the sequence is HRGAKLAAVGGACRPQVPDLSTAYLVHLLLR. The helical transmembrane segment at 129–149 threads the bilayer; the sequence is MLLEAGLAFLHYFLFGFSVPA. Topologically, residues 150 to 173 are extracellular; that stretch reads RVSCSHVPCSGAVDCYVSRPTEKS. A helical transmembrane segment spans residues 174 to 194; the sequence is LLILFFWAVSALSFLLSLADL. Residues 195-364 are Cytoplasmic-facing; it reads LWILPRRKTL…HLRTKKSEWV (170 aa). Positions 331–340 are enriched in polar residues; the sequence is HLARHSSASK. Residues 331 to 364 are disordered; that stretch reads HLARHSSASKPQAPCRLTTSGSAPHLRTKKSEWV.

This sequence belongs to the connexin family. Delta-type subfamily. A connexon is composed of a hexamer of connexins.

The protein resides in the cell membrane. It is found in the cell junction. Its subcellular location is the gap junction. Functionally, one gap junction consists of a cluster of closely packed pairs of transmembrane channels, the connexons, through which materials of low MW diffuse from one cell to a neighboring cell. The protein is Gap junction delta-4 protein (Gjd4) of Mus musculus (Mouse).